Here is a 242-residue protein sequence, read N- to C-terminus: DNA repair protein RecO (242 aa).

This sequence belongs to the RecO family. In terms of assembly, monomer.

In terms of biological role, involved in DNA repair and RecF pathway recombination. The protein is DNA repair protein RecO of Salmonella gallinarum (strain 287/91 / NCTC 13346).